A 336-amino-acid polypeptide reads, in one-letter code: Adenosine deaminase (336 aa).

His15 and His17 together coordinate Zn(2+). Residues His17, Asp19, and Gly172 each contribute to the substrate site. A Zn(2+)-binding site is contributed by His199. Residue Glu202 is the Proton donor of the active site. Zn(2+) is bound at residue Asp279.

It belongs to the metallo-dependent hydrolases superfamily. Adenosine and AMP deaminases family. Adenosine deaminase subfamily. The cofactor is Zn(2+).

It carries out the reaction adenosine + H2O + H(+) = inosine + NH4(+). The enzyme catalyses 2'-deoxyadenosine + H2O + H(+) = 2'-deoxyinosine + NH4(+). Its function is as follows. Catalyzes the hydrolytic deamination of adenosine and 2-deoxyadenosine. The chain is Adenosine deaminase from Streptococcus thermophilus (strain ATCC BAA-491 / LMD-9).